Consider the following 191-residue polypeptide: Tellurium resistance protein TerE (191 aa).

It belongs to the CAPAB/TerDEXZ family.

Its function is as follows. Not known; seems to contribute to the tellurium resistance (Ter) mechanism. Also involved in phage inhibition (Phi) and colicin resistance (PacB). The polypeptide is Tellurium resistance protein TerE (terE) (Serratia marcescens).